The primary structure comprises 536 residues: REST corepressor 2 (536 aa).

Positions 1–44 (MERSGSGVLSRSRAKTVTNGNSQHSEEESSDEEHPNDSMIRVGG) are disordered. Positions 24-36 (HSEEESSDEEHPN) are enriched in basic and acidic residues. The ELM2 domain occupies 38 to 123 (SMIRVGGDYQ…KSLADLANFT (86 aa)). Residues 124–175 (PFPDEWTVEDKVLFEQAFSFHGKSFHRIQQMLPDKMITSLVKYYYSWKKTRT) enclose the SANT 1 domain. The tract at residues 179 to 264 (VMDRQARKLL…RARRRPPKGM (86 aa)) is disordered. A compositionally biased stretch (acidic residues) spans 197-211 (NDEIEEGDPGSDSDF). The span at 249 to 262 (YRHHPLRARRRPPK) shows a compositional bias: basic residues. Residues 283-315 (VTIRQLDTQLVSLKRQVQKIKQTNSVLRNNLGD) adopt a coiled-coil conformation. Residues 328–379 (KINSRWTTEEQLLAVQAVRRYGKDFAAIADVIGNKTVAQVSSFFVSYRRRFN) enclose the SANT 2 domain. Positions 389–536 (AEQEVQGSSG…GLKVESPQSH (148 aa)) are disordered. The segment covering 391-406 (QEVQGSSGRTVNTELN) has biased composition (polar residues). Residues 422–449 (SPPHSDSPLPSSEGSASGNHSSAQSSPP) show a composition bias toward low complexity. Pro residues predominate over residues 450–476 (LTQPPPLLRPAPPSAPPSLLRQPPPLQ).

Belongs to the CoREST family.

It localises to the nucleus. May act as a component of a corepressor complex that represses transcription. The protein is REST corepressor 2 (rcor2) of Danio rerio (Zebrafish).